A 258-amino-acid chain; its full sequence is Countin-1 (258 aa).

An N-terminal signal peptide occupies residues 1–21; that stretch reads MNKLFSLILALFLVNSAVVSS. The Saposin B-type domain occupies 22–106; sequence LDSCSICVDF…EKISVCKTND (85 aa). 3 disulfides stabilise this stretch: Cys-25/Cys-102, Cys-28/Cys-96, and Cys-56/Cys-69. Residues Asn-121 and Asn-215 are each glycosylated (N-linked (GlcNAc...) asparagine). A compositionally biased stretch (low complexity) spans 233 to 248; the sequence is AGSFSGSSQSTQTGAA. Residues 233–258 are disordered; it reads AGSFSGSSQSTQTGAASGSGSGFALF. The span at 249–258 shows a compositional bias: gly residues; the sequence is SGSGSGFALF.

The protein belongs to the countin family. Component of the counting factor (CF) complex, which includes cf60, cf50, cf45-1 and ctnA.

Its subcellular location is the secreted. Cell-counting factor that limits the maximum size of the multicellular structure. May down-regulate the expression of gp24, which mediates cell adhesion. This Dictyostelium discoideum (Social amoeba) protein is Countin-1 (ctnA).